The following is a 216-amino-acid chain: Adenylate kinase (216 aa).

ATP is bound at residue 10–15; it reads GAGKGT. The segment at 30–59 is NMP; it reads STGDMLRAAVKAGTPLGLELKKVMDAGQLV. AMP-binding positions include T31, R36, 57–59, 85–88, and Q92; these read QLV and GFPR. An LID region spans residues 122–159; that stretch reads GRRVHLASGRTYHIQYNPPKVEGKDDVTGEDLIQRDDD. ATP-binding positions include R123 and 132 to 133; that span reads TY. AMP contacts are provided by R156 and R167. G202 lines the ATP pocket.

It belongs to the adenylate kinase family. Monomer.

It localises to the cytoplasm. The enzyme catalyses AMP + ATP = 2 ADP. It functions in the pathway purine metabolism; AMP biosynthesis via salvage pathway; AMP from ADP: step 1/1. In terms of biological role, catalyzes the reversible transfer of the terminal phosphate group between ATP and AMP. Plays an important role in cellular energy homeostasis and in adenine nucleotide metabolism. The chain is Adenylate kinase from Pseudomonas putida (strain GB-1).